A 216-amino-acid polypeptide reads, in one-letter code: ATP phosphoribosyltransferase (216 aa).

This sequence belongs to the ATP phosphoribosyltransferase family. Short subfamily. As to quaternary structure, heteromultimer composed of HisG and HisZ subunits.

The protein localises to the cytoplasm. The enzyme catalyses 1-(5-phospho-beta-D-ribosyl)-ATP + diphosphate = 5-phospho-alpha-D-ribose 1-diphosphate + ATP. It participates in amino-acid biosynthesis; L-histidine biosynthesis; L-histidine from 5-phospho-alpha-D-ribose 1-diphosphate: step 1/9. In terms of biological role, catalyzes the condensation of ATP and 5-phosphoribose 1-diphosphate to form N'-(5'-phosphoribosyl)-ATP (PR-ATP). Has a crucial role in the pathway because the rate of histidine biosynthesis seems to be controlled primarily by regulation of HisG enzymatic activity. In Thiobacillus denitrificans (strain ATCC 25259 / T1), this protein is ATP phosphoribosyltransferase.